Here is a 3418-residue protein sequence, read N- to C-terminus: Breast cancer type 2 susceptibility protein (3418 aa).

Residues methionine 1–proline 40 form an interaction with PALB2 region. A disordered region spans residues serine 37 to lysine 68. At serine 70 the chain carries Phosphoserine. Positions valine 358–aspartate 381 are disordered. Residues serine 445, serine 492, and serine 755 each carry the phosphoserine modification. Residues leucine 639–isoleucine 1000 form an interaction with NPM1 region. BRCA2 repeat units follow at residues asparagine 1002–glutamate 1036, asparagine 1212–asparagine 1246, phenylalanine 1421–glutamate 1455, lysine 1517–glutamine 1551, isoleucine 1664–phenylalanine 1698, and phenylalanine 1837–serine 1871. Positions histidine 1003–glutamate 2082 are interaction with RAD51. An interaction with POLH region spans residues glycine 1338–aspartate 1781. The required for stimulation of POLH DNA polymerization activity stretch occupies residues threonine 1410–glutamine 1595. The residue at position 1970 (serine 1970) is a Phosphoserine. The stretch at serine 1971–aspartate 2005 is one BRCA2 7 repeat. Position 2035 is a phosphothreonine (threonine 2035). Residues asparagine 2051–leucine 2085 form a BRCA2 8 repeat. Serine 2095 bears the Phosphoserine mark. The interval glycine 2270–threonine 2337 is interaction with HSF2BP. Residues threonine 2350 to valine 2545 form an interaction with FANCD2 region. A disordered region spans residues glutamate 2430–asparagine 2450. Positions isoleucine 2481–glutamate 2832 are interaction with SEM1. The short motif at alanine 2682–alanine 2698 is the Nuclear export signal; masked by interaction with SEM1 element. Position 3291 is a phosphoserine; by CDK1 and CDK2 (serine 3291). Serine 3319 carries the phosphoserine modification. Threonine 3387 carries the phosphothreonine; by CHEK1 and CHEK2 modification. The tract at residues glutamate 3393–isoleucine 3418 is disordered.

Monomer and dimer. Interacts with RAD51; regulates RAD51 recruitment and function at sites of DNA repair. Interacts with WDR16, USP11, DMC1, ROCK2 and NPM1. Interacts with SEM1; the interaction masks a nuclear export signal in BRCA2. Interacts with both nonubiquitinated and monoubiquitinated FANCD2; this complex also includes XRCC3 and phosphorylated FANCG. Part of a BRCA complex containing BRCA1, BRCA2 and PALB2. Component of the homologous recombination repair (HR) complex composed of ERCC5/XPG, BRCA2, PALB2, DSS1 and RAD51. Within the complex, interacts with ERCC5/XPG and PALB2. Interacts directly with PALB2 which may serve as a scaffold for a HR complex containing PALB2, BRCA2, RAD51C, RAD51 and XRCC3. Interacts with BRCA1 only in the presence of PALB2 which serves as the bridging protein. Interacts with POLH; the interaction is direct. Interacts with the TREX-2 complex subunits PCID2 and SEM1. Interacts with HSF2BP and BRME1; the interaction with HSF2BP is direct and allows the formation of a ternary complex. The complex BRME1:HSF2BP:BRCA2 interacts with SPATA22, MEIOB and RAD51. In terms of processing, phosphorylated by ATM upon irradiation-induced DNA damage. Phosphorylation by CHEK1 and CHEK2 regulates interaction with RAD51. Phosphorylation at Ser-3291 by CDK1 and CDK2 is low in S phase when recombination is active, but increases as cells progress towards mitosis; this phosphorylation prevents homologous recombination-dependent repair during S phase and G2 by inhibiting RAD51 binding. Ubiquitinated in the absence of DNA damage; this does not lead to proteasomal degradation. In contrast, ubiquitination in response to DNA damage leads to proteasomal degradation. In terms of tissue distribution, highest levels of expression in breast and thymus, with slightly lower levels in lung, ovary and spleen.

Its subcellular location is the nucleus. It localises to the cytoplasm. The protein resides in the cytoskeleton. It is found in the microtubule organizing center. The protein localises to the centrosome. In terms of biological role, involved in double-strand break repair and/or homologous recombination. Binds RAD51 and potentiates recombinational DNA repair by promoting assembly of RAD51 onto single-stranded DNA (ssDNA). Acts by targeting RAD51 to ssDNA over double-stranded DNA, enabling RAD51 to displace replication protein-A (RPA) from ssDNA and stabilizing RAD51-ssDNA filaments by blocking ATP hydrolysis. Part of a PALB2-scaffolded HR complex containing RAD51C and which is thought to play a role in DNA repair by HR. May participate in S phase checkpoint activation. Binds selectively to ssDNA, and to ssDNA in tailed duplexes and replication fork structures. May play a role in the extension step after strand invasion at replication-dependent DNA double-strand breaks; together with PALB2 is involved in both POLH localization at collapsed replication forks and DNA polymerization activity. In concert with NPM1, regulates centrosome duplication. Interacts with the TREX-2 complex (transcription and export complex 2) subunits PCID2 and SEM1, and is required to prevent R-loop-associated DNA damage and thus transcription-associated genomic instability. Silencing of BRCA2 promotes R-loop accumulation at actively transcribed genes in replicating and non-replicating cells, suggesting that BRCA2 mediates the control of R-loop associated genomic instability, independently of its known role in homologous recombination. This is Breast cancer type 2 susceptibility protein from Homo sapiens (Human).